A 247-amino-acid polypeptide reads, in one-letter code: 5-oxoprolinase subunit A (247 aa).

This sequence belongs to the LamB/PxpA family. In terms of assembly, forms a complex composed of PxpA, PxpB and PxpC.

It catalyses the reaction 5-oxo-L-proline + ATP + 2 H2O = L-glutamate + ADP + phosphate + H(+). In terms of biological role, catalyzes the cleavage of 5-oxoproline to form L-glutamate coupled to the hydrolysis of ATP to ADP and inorganic phosphate. In Vibrio vulnificus (strain CMCP6), this protein is 5-oxoprolinase subunit A.